A 189-amino-acid chain; its full sequence is UPF0301 protein PputW619_0469 (189 aa).

The protein belongs to the UPF0301 (AlgH) family.

This chain is UPF0301 protein PputW619_0469, found in Pseudomonas putida (strain W619).